Reading from the N-terminus, the 255-residue chain is Probable transcriptional regulatory protein CMM_1817 (255 aa).

This sequence belongs to the TACO1 family.

The protein localises to the cytoplasm. In Clavibacter michiganensis subsp. michiganensis (strain NCPPB 382), this protein is Probable transcriptional regulatory protein CMM_1817.